The sequence spans 322 residues: Nodulation protein D 1 (322 aa).

The HTH lysR-type domain maps to 6 to 63 (LDLNLLVALDALMTERKLTAAARSINLSQPAMSAAITRLRTYFRDELFTMNGRELVPT). The segment at residues 23-42 (LTAAARSINLSQPAMSAAIT) is a DNA-binding region (H-T-H motif).

It belongs to the LysR transcriptional regulatory family.

Functionally, regulates the expression of the nod abcFE genes which encode other nodulation proteins. NodD is also a negative regulator of its own expression. Binds flavonoids as inducers. This is Nodulation protein D 1 (nodD1) from Sinorhizobium fredii (strain NBRC 101917 / NGR234).